We begin with the raw amino-acid sequence, 492 residues long: Trigger factor (492 aa).

A PPIase FKBP-type domain is found at 169–254 (GDRVSIDYVG…VKEVSKPGEL (86 aa)). The interval 441 to 492 (LMADDEDAETTTKAKPAKKAAAKKAEAKANEDEAEEPKKKAAPKKKAAKDAE) is disordered. The span at 463-479 (KKAEAKANEDEAEEPKK) shows a compositional bias: basic and acidic residues. Positions 480 to 492 (KAAPKKKAAKDAE) are enriched in basic residues.

Belongs to the FKBP-type PPIase family. Tig subfamily.

It localises to the cytoplasm. The enzyme catalyses [protein]-peptidylproline (omega=180) = [protein]-peptidylproline (omega=0). Its function is as follows. Involved in protein export. Acts as a chaperone by maintaining the newly synthesized protein in an open conformation. Functions as a peptidyl-prolyl cis-trans isomerase. This chain is Trigger factor, found in Mesorhizobium japonicum (strain LMG 29417 / CECT 9101 / MAFF 303099) (Mesorhizobium loti (strain MAFF 303099)).